We begin with the raw amino-acid sequence, 191 residues long: Amelogenin, X isoform (191 aa).

The signal sequence occupies residues 1–16; that stretch reads MGTWILFACLLGAAFA. Position 32 is a phosphoserine (Ser-32). The segment covering 95-117 has biased composition (low complexity); sequence IPQQPMMPVPGQHSMTPIQHHQP. Residues 95 to 191 form a disordered region; sequence IPQQPMMPVP…TDKTKREEVD (97 aa). The span at 118 to 171 shows a compositional bias: pro residues; the sequence is NLPPPAQQPYQPQPVQPQPHQPMQPQPPVHPMQPLPPQPPLPPMFPMQPLPPML.

It belongs to the amelogenin family. Interacts with KRT5. In terms of processing, phosphorylated by FAM20C in vitro.

The protein localises to the secreted. It localises to the extracellular space. It is found in the extracellular matrix. In terms of biological role, plays a role in biomineralization. Seems to regulate the formation of crystallites during the secretory stage of tooth enamel development. Thought to play a major role in the structural organization and mineralization of developing enamel. This is Amelogenin, X isoform (AMELX) from Homo sapiens (Human).